Reading from the N-terminus, the 71-residue chain is Sperm-associated antigen 11A (71 aa).

The signal sequence occupies residues 1-19; sequence MIPRLLPFFASLLFAALLF. Cystine bridges form between Cys-32-Cys-61, Cys-39-Cys-54, and Cys-44-Cys-62.

The protein belongs to the beta-defensin family.

The protein resides in the secreted. Its function is as follows. Has antimicrobial activity against E.coli. Plays a role in the defense response in the male reproductive tract, contributing to sperm maturation, storage and protection. This is Sperm-associated antigen 11A from Mus musculus (Mouse).